Consider the following 307-residue polypeptide: G-protein coupled receptor 35 (307 aa).

Topologically, residues 1-18 (MNSTTCNSTLTWPASVNN) are extracellular. Asparagine 2 and asparagine 7 each carry an N-linked (GlcNAc...) asparagine glycan. Residues 19-39 (FFIIYSALLLVLGLLLNSVAL) traverse the membrane as a helical segment. The Cytoplasmic segment spans residues 40–53 (WVFCYRMHQWTETR). A helical membrane pass occupies residues 54–74 (IYMTNLAVADLCLLCSLPFVL). Topologically, residues 75-88 (YSLKYSSSDTPVCQ) are extracellular. Cysteine 87 and cysteine 160 are joined by a disulfide. A helical membrane pass occupies residues 89-110 (LSQGIYLANRYMSISLVTAIAV). Topologically, residues 111 to 129 (DRYVAVRHPLRARELRSPR) are cytoplasmic. The helical transmembrane segment at 130–150 (QAAAVCVALWVIVVTSLVVRW) threads the bilayer. The Extracellular segment spans residues 151-176 (RLGMQEGGFCFSSQTRRNFSTTAFSL). The chain crosses the membrane as a helical span at residues 177-197 (LGFYLPLAIVVFCSLQVVTVL). Topologically, residues 198-217 (SRRPAADVGQAEATQKATHM) are cytoplasmic. The helical transmembrane segment at 218 to 238 (VWANLAVFVICFLPLHVVLTV) threads the bilayer. Residues 239–257 (QVSLNLNTCAARDTFSRAL) are Extracellular-facing. Residues 258-278 (SITGKLSDTNCCLDAICYYYM) traverse the membrane as a helical segment. Topologically, residues 279–307 (AREFQEASKPATSSNTPHKSQDSQILSLT) are cytoplasmic. Phosphoserine occurs at positions 286, 292, 298, and 301. The disordered stretch occupies residues 288-307 (PATSSNTPHKSQDSQILSLT).

It belongs to the G-protein coupled receptor 1 family. Multiply phosphorylated in clusters of serines and threonines in the C-terminal tail. Phosphorylation of Ser-298 and Ser-301 is mediated by GRK5 and/or GRK6. As to expression, predominantly expressed in immune and gastrointestinal tissues. Strongly GPR35 expressed in colonic macrophages.

It is found in the cell membrane. G-protein coupled receptor that binds to several ligands including the tryptophan metabolite kynurenic acid (KYNA), lysophosphatidic acid (LPA) or 5-hydroxyindoleacetic acid (5-HIAA) with high affinity, leading to rapid and transient activation of numerous intracellular signaling pathways. Plays a role in neutrophil recruitment to sites of inflammation and bacterial clearance through the major serotonin metabolite 5-HIAA that acts as a physiological ligand. Stimulates lipid metabolism, thermogenic, and anti-inflammatory gene expression in adipose tissue once activated by kynurenic acid. In macrophages, activation by lysophosphatidic acid promotes GPR35-induced signaling with a distinct transcriptional profile characterized by TNF production associated with ERK and NF-kappa-B activation. In turn, induces chemotaxis of macrophages. The polypeptide is G-protein coupled receptor 35 (Gpr35) (Mus musculus (Mouse)).